Reading from the N-terminus, the 13041-residue chain is MASDINTHPEGATKFWQQHFDGLNASVFPALSSHLTVPRPNAQTAHRISYSTLAKQKWDNTSLCRAALAILLARYSNASEALFGVLVEQFLPSNGEQASTEESPQSILPIRIRLDLEEAGLGLLQAINTLDASLREWKHIGLDAIRGTGEYGSAGCEFQTVLAVTTGKTPRTHRLASCTDRALLLDCRMDDDSATLLARYDPSVIDDLQVARFLKQLGHVIEQLRVQAVDLPLWELGIVTQEDSAEIQKWNSQQLQFSQECIHDVFANRVVDTPQKIAVSAWNGELTFAELDSFSSCLAQHIQSLELGDAKAIPLCFEKSKWAIVGMLGVLKAGRAFTLIDPSNPPARARQICRQTAATISIASPYQCDMMRALVPDCIVVDDDFFKSLAFDTDQFQPTATPQTLAYILFTSGSTGEPKGSMMEHHGFVSCCLEFGAALGINSNTRALQFASYAFGACLLEILTTLMHGGTVCIPSDDERINDAPGFIRRANVNWAILTPSFIGAIQPTTVPNLKTLVLVGEAMPSDIRDVWASHVQLKNAYGQSESATICSVTEVTPATVEAHNIGHAVGARFWITDPNNPNKLAPIGCVGELLVESPGIARGYLIPLPADATPFIDTLPDWYPRTQPLDNFKFYRTGDLVCYRSDGTVVYLGRRDSQIKIRGQRVEIGEVETCLRQQLPSQLVPVVEAVSLSGMSKSMTLIAFLVGENTILEEDVYVLEGSAAQRISSKLRQIVPGYCIPSHYIRINHLPTTATGKCDRKALRAIGTKLLREAVEGMASQEEQESASLMTEGITLERIWFQSLGLKPNSTRHKSNFFNLGGDSIAAIRMVNMARAAGLLLSISDIFQNPSLAGLINVMQQSSTAQDAIPATEYSGPVEQSFAQGRLWFLDQLTTGASWYLMPLAVRIHGPLRVQALSSALHALEQRHETLRTTFEQQDGMGVQIVHPSSKRELRVIDVSGKQNGGYDQVLKREQTTPIDLAKEPGWRAALLRVGDDEHILSIVIHHIIYDGWSLGVLREELGDLYAAALRGPDPLAHMAPLPIQYRDFSVWQKQPQQVAQHQQQLVYWTKQLEDSAPAELLTDFPRPAELSGRAGEVRFTIEGSVFDSLLAFRRVHQTTSFAVLLAVFRAAHYRLTGTEDATIGTPIANRTRAEVEKLIGFFVNTQCMRIAVADDDTFASLVSQVWSVATAAFEHQDVPFERIVSALLPGARDTSRNPLAQLLFALHLEQDLDKINLEGLACETVPTPMATRFDVEFHLFQEDDRLNGVVNFSTDLFEPQTIHSLVSVFQEILRRGLDQPQTPIAHLQLTDGLEELRNAGLLDIKRIDYPREASVVDMFQKQVAACPNVTAVKDSTSQLTYAQLDQESDKIAVWLRKRNIPAETLIALLAPRSCDSVAAFLGILKANLAYLPLDVNVPAARIEAILSTVAGHKLVLLGRDVPLLGTQLADLELVRIGEALRGSSSGSVAADKAIRPTATSLAYVIFTSGSTGQPKGIMVPHRSLVNVIKQRPAYGNVAHMTNLAFDPSLFEMCTALFNGNTLICIDTLVALDATQLPTIFKQEAIRVAMMTPALLTRLLAQATDALHELEALYVLGDRFPPKDAARASELVKTAVYNAYGPSENSICTTLFHAATGAMCTNGVPVGRVINNSGVYVMDPKQSLVSYGVMGELVVAGEGLAIGYTKPELNEGRFLTLTMDGKPVRAFRTGDRVRYRPTDGQLEFFGRMDFQIKIRGHRVELAEVERVLNRHPAIKDAITLLRQHGSSAQDTELVSFIVLGEQKPVKPHRNATDHGGMEIEQLDQKLEANLRAMMQATLPSYMVPSRIIVLDHMPLDKNGKVDRRGLTGLTLSPAMETSSRVVVAARNEIEAVLCEEFAHILGVEIGVTDNFFDLGGHSLMATTLAARLARRLNASISVKDVFDQPIVANLAATIKRGSTPHNAIPPTKYSGPVEQSFAQGRLWFLDQLNLGAAWYHMPLAVRLRGPLHLEALTAALHALEERHETLRTVFEEQDGVGMQIVRPSSKTPLRIIDVSTKERGYAELLKQEQTTPFDLATELGWRVALLRQGKDDHILSIVIHHIISDGWSLDILCEELGQFYAAVLRGQDPLAQISPLPIQYRDFSLWQKQPEQVAEHHRQLEYWTTQLEGSVPAELLTDLPRPTIQSGKAGVIPITVNGPVYERLRAFSRAHQTTAFAVLLAAFRATHYRLSGVADATIGTPIANRNRPELENMIGFFVNAQCMRITVEQDDTFETLVRQIRFTATAAFANQDVPFEHIVSALMPDSRDTSRNPLVQLMFALHAYKDLGKIELEGYVAEPVHTTLSTRFDLEFHMFQETNHLSGYVLYATDLFEPESIEGMVSIFKEILARALDQPQTPLALLPLTDGLAELRRRGLLEIERPSYPRESSVVDVFCSQVAASPNATAVKDSISQLTYAQLNEQSDKVAAWLHQCNLPTETLVAVLAPRSCQTVVAFLGILKANLAYLPLDVNVPAARIEAILSEVSGHILVLLGSHVSAPKIELADVEFVKIDNTVEHNLPGRIGSAPSATSLAYVIFTSGSTGKPKGVKVEHRGIVRLVKESNVVAKMPQAARIAHLSNIAFDAATWELYAALLNGGTLVCINYLTTLDSKALEAVFEQEKIQAAMLPPALLKQYLVNIPAAIGALEVVLVAGDRFDRRDAAATQALVGAGVYNAYGPTENTTLSTIYNVVQGDANVNGVPIGRPVSNSGAYIMNMNQELVPIGVIGELVVVGDGVARGYTDPALDVNRFVNVTIEGQTMRAYRTGDRARYRPKDAQIEFFGRMDQQIKIRGHRIEPAEVEHALLNNDLLQDAAVIIRKQQNDELEMVAFVEANSNKSIEQEASNQVEDWGAQFESNVYAEIEAIDASAVGNDFMGWTSMYDGSAIDKAEMQEWLDDTMQTILDGRPAGRVLEIGTGTGMILFNLGEGLQSYVGLEPSTSAAAFVNRRIQTLPAFAGKAEVHVGTATDISQLQDLRPEVVVINSVAQYFPSPEYLSKVLYALAQIPGVKRLFFGDMRSYAINDQFLAARALHNIGSKATKSAIRSKMVDLENSEEELLVDPTFFTNLATELPEVEHVEILPKRMQATNELSAYRYAAVVHIRDSSERAQTVHAIKSSAWVDFSKSQMDRKALISLLQSSVNTEAVAIGNIPYSKTIMARHVVQSLDEDNADKDIAQDKPDKPTWISAVRSNAEHCPSLSALDLVQLGEEAGFCVELSWAQQRSHHGAIDAVFHHYQPAREGSRVLFQFPTDTYRRQSGPLTNRPLQRIQSRRMETQVREKLRAVLPSYMIPSLIVLVDQMPLNPNGKVDRKALERRAQAVLRVEKPTSERVGARNETEAVLCEEFTDVLGLEVGITDNFFDLGGHSLMATKLAARISRRLDARVSVKDVFDQPVIVDLAASIRRGSTPHNPITPTEYSGPVEQSFAQGRLWFLDQLNLGASLYLMPLALRLRGPLRIDALTAALFALEQRHETLRTVFKEQDGVGIQIIQPSQKKKLRTIDVSAGDFSEALHHERTAPFDLASEPGFRVALLQLEPSDHVLSIVMHHIIYDGWSIDILCQELGQFYAAAIQGQDPLGQVSPLPIQYRDFSVWQKQPEQVAEHERQLAYWIDQLADSAPAEFLVDLPRPPVLSGDAGLVHLTIDGPIYDRLRAFCRVHQTTTFAVLLAAFRATHYRLTGAEDATVGTPIANRNRPELENLVGFFVNTQCMRISVGDDDTFEQLVRQVRSTATAAFANQDVPFERIVSTLLPGSRDTARNPLVQLMFAVHSLKDLGKIQFEGLVGETIPTASFTRFDVEFHLFQEVGRLSGNVLFSTDLFEPETIQGMVSVFMEILRGALDQPQIPIAVLPLTDGLTELRNRGLLEVEQPQYPRDSSVIDVFRAQVVACPDAIAVKDSTSQLTYAQLDEQSDEVAVWLHQRKLPAESLVAVLAPRSCETIITFFGILKANLAYLPLDINVPAARIQAILSSVAGKKILLLGSDQAQPEIRLDDVEFVQINETIDHNMAKDNTTRSGPLATSLAYVIFTSGSTGQPKGVKVEHRGIVRLVKNSNVVAKMPEAACVAHLSNLAFDAATWEIYAALLNGGSLICIDYFTTLDSKVLEAVFEREQIRAAMFPPALLKQCLLNIPTTISALDVILAAGDRFDRRDAIAAQALVGGGVYNAYGPTENTTLSTIYNVVDGDTNVNGIPIGLPVSNSGVYVMDPNQQLVPLGVMGELVVVGDGVARGYTDPALDVDRFIKVEIDGQIVRAYRTGDRVRHRPKDGQIEFFGRMDQQVKIRGHRIELAEVEHVILDNSLVQDAAVIVHKQADQEIEMIAFAIVRGDNDSKHPEKDILDRVKALLPSYMVPAQMVLLNSMPLNANGKVDRKELAKRAGTVPRSEMAYVAPERVPPRNEIETILCEEYAEVLGVEVGVMDNFFDLGGHSLMATKLAARATRRLDAKLSVKDIFDYPILANLAAAVQRGSTPHNAILATTYSGPVEQSFAQGRLWFLDQLNVGSNWYLQPIAIRIRGSLNINALTTALHALEQRHETLRTTFEEEDGVGMQVVQEYDPIELRIMDIAADYDGDYTEALKGEQTTPFDLESEPGWRVSLLRMNDNDHILSLVLHHIISDGWSVDVLRQELKQFYAAALQGLDPLSGADPLPIQYRDFSLWQKQPEQVAEHERQLKYWVEQLADNSPATLLADRPRPSVLSGQAGSVPLSIEGQVYEKLQAFCRAHQTTSFSVLLAAFRAAHFRLTGVDDATIGIPIANRNRPELEHLIGFFVNRQCMRITVGEDDTFESLIRQVHSTATAAYANQDVPFERIVSSLLSGSRDTSRNPLVQLVFAVHSQKNLGKFELQDLTSEPVAGAISTRFDAEFHLFQEEERLNGVVYYATDLFDAETIQGVVSVFQEILRRGLNHPRTPIAALSLTDGLDNLRKMNLVHFKRTDYPRDSSMVDIFREQVATYPDVIAVKDSTLQLTYAQLDQQSDEIATWLRNKKMAPETLVGVLAPRSCQTIVAFLGVLKANLAYLPLDVNAPMARVETIMSSVPGSKLLLLGSDVPAQEIQLQNVELVRIEDTLGHAASAGTATTEPSPTSLAYVIFTSGSTGKPKGVMVEHRSVIRLVRKESNSMSKMSSRARVAHLTNIAFDVSAWEVYATLLNGGTLVCVDYFTSFDAKALGLLFEREQITAAMITPTLLKQCITIVPEALRKLSVLYTGGDRFDRRDAIATKALVKGPVYNAWGPTETTIVSTIYELADDDQFTNGVPIGKAVSNSWAYVMDLNQQLVPVGVMGEAVVIGDGLARGYTDPALDCNRFVHITIDGKRVRAYRTGDRARYRPKDGEIEFFGRMDRQLKIRGHRIEPAEIEHAMLGHNDIVDVAIVTRHQDGAGLEMVAFVTAHTNKSIERNEATNQVAGWGDHFESSTYAELDTLVKSDVGKDFVGWTNMYDGGAIDQAEMQEWLDDTIQTIVDGQPAGHVFEIGTGTGMIMFGLGKQGLQSYVGLEPSTSATTYVNRKIKTAPTVAGKAKVYVGTAMEAAQLNGLHPEVVVINSVAQYFPTPEYLLEVVGILTQMPGVKRLFFGDIRSYATNRKFLAARALHMLGSNAKKHDIRRKMAELDEFEEELIVDPSFFTGLVSRLPGQVKHVEILPKQMIATNELSAYRYAAVVHLALPEEQHIAKIEKGAWVDFTATKMDRSALVHHLQSSSNAEIVAISNIPFSKTNFDCHLLASLDEDEEHSLDGSAWIKTIHSSAEQCPSLSATDLVEVAKEVGFRVELSWARQKSQNGALDAIFHQYQSPKEGSRVLIQFPTDDQGRSMESLTNRPLQRVQSRRIETQIRERLQAVLPSYMIPARIVVLNEMPVNANGKVDRKELTRRAKVVPRIETAAERIQPRNEVEAVLCEEFSEVLGVEVGVTDNFFDLGGHSLMATKLAARTGRRLDAKVSVKDVFDHPVLADLAAAIQRGSTPHSAIVTTEYSGPVEQSYAQGRLWFLEQLNFKATWYLLPLAVRIRGPLNIKALTTALHALEQRHETLRTTFIERDGVGKQAVQPFQPKELEIVDIAADHQGDYLKVLRDEQTTMFNLATQPGWRVTLHRVDQNTHNLSIVMHHIISDGWSVDVLRHELRQFYAAALRGQDPLAHISPLPIQYRDFSLWQKQPDQIIEHAKQLEYWTKQLADSSPAELPTDLPRPAVLSGKAGEVALSVKGPLYERLQAFCKTHQTTAFATLLAAFRATHHRLTGAEDATIGTPIANRNRPELENLIGFFVNAQCMRITIDGDETFESLIRQVRATATAAIANQDVPFERIVSTMQSTSRDTSRNPLVQLMFALHSQQDLGKIQLEGCETEPIPRAVRTRFDLEFHLYQEQGSLGGIVYFATDLFEPESIEGMVSIFKEILARALDQPQTPLALLPLTDGLAELRRRGLLEIERPSYPRESSVVDVFCSQVAASPNATAVKDSISQLTYAQLNEQSDKVAAWLHQCNLPTETLVAVLAPRSCQTVVAFLGILKANLAYLPLDVNVPAARIEAILSEVSGHILVLLGSHVSAPKIELADVEFVKIDNTVEHNLPGRIGSAPSATSLAYVIFTSGSTGKPKGVKVEHRGIVRLVKESNVVAKMPQAARIAHLSNIAFDAATWELYAALLNGGTLVCINYLTTLDSKALEAVFEQEKIQAAMLPPALLKQYLVNIPAAIGALEVVLVAGDRFDRRDAAATQALVGAGVYNAYGPTENTTLSTIYNVVQGDANVNGVPIGRPVSNSGAYIMNMNQELVPIGVIGELVVVGDGVARGYTDPALDVNRFVNVTIEGQTMRAYRTGDRARYRPKDAQIEFFGRMDQQIKIRGHRIEPAEVEHALLNNDLLQDAAVIIRKQQNDELEMVAFVEANSNKSIEQEASNQVEDWGAQFESNVYAEIEAIDASAVGNDFMGWTSMYDGSAIDKAEMQEWLDDTMQTILDGRPAGRVLEIGTGTGMILFNLGEGLQSYVGLEPSTSAAAFVNRRIQTLPAFAGKAEVHVGTATDISQLQDLRPEVVVINSVAQYFPSPEYLSKVLYALAQIPGVKRLFFGDMRSYAINDQFLAARALHNIGSKATKSAIRSKMVDLENSEEELLVDPTFFTNLATELPEVEHVEILPKRMQATNELSAYRYAAVVHIRDPARQAQTVHTIDPTAWIDFSASQMNRTALANLLQNSADAAAIAVSNIPYSKTILARHIVQSLDDDLTDSDDPQDELEGAAWMSAIRSNIKTCASLSAFDLAQLAQEKGFRVELSWARQRTHHGALDAVFHHYKSNQDGGRVLVQFPTDSRPRLSGQLTNQPLQRLQSRRLEAQIRDQLSALLPSYMIPSLIVMVDEMPLNANGKVDRKALERRARMVQKVEKPASERVGARNEIEAALCEVFVDLLGTEVSITDNFFNLGGHSLMATKLAARISRRLDARISVKDVFDYPVLADLAGAVQRGSTPHNPIVATPYSGPVEQSFAQGRLWFLDQLNAGSLWYIQPIAVRVRGSLNIGALTTALNALEKRHEPLRTTFEEHDGIGVQVVQPHQPKKLRIVDTVANYQGDFIRALRKEQQTLFNLATEPGWRVSLLRIGEDDNILSIVMHHIISDGWSVDILRQDLKLFYAAALKSQEPQVDALPIQYRDFAFWQKQPEQVAEHQRQLDYWIEQLKDSKPAELITDFPRPEVLSGTAGIVQLAVDGQVYEGLRAFCRIHQTTSFVVLLAAFRAAHYRLTGTEDATIGSPIANRNRPELESLIGFFVNTQCMRIMVGEDDTFERLVQQVRSTTTAAFANQDVPFERIVSSVQSTSRDASRNPLVQLMFALHSQQGIGLMELEGVETEPIARDVSTRFDIEFHLYQKEESLHGVVHFAADLFEPETIQGLVSVFQEILRRGLETPRLPISILPLDNNIPELLVGMLDVDTPEYPRDSSVVDVFRTQVAASPDAIAVKDSTSQLTYAQLDEESNKVATWLSQRQLAPETLVGVLAPRSCPTIVTFFGILKASLAYLPLDVNVPSARIEAILSAVPDHKLVFLGADVPDPEAPLVNVELVRIDDILRQSIHASNAGLLANHPLATSLAYVMFTSGSTGKPKGVMVEHRSIVRLVKETNLVPAVEAVSSVAHISNVAFDAATWEIYAALLNGGTTVCIDHITVLDPAKLALVFSSEKIKAAFFSTALLKQRLYEEPSTITGLDLLYAGGERMRPQDALKTRELVRGSFCHVYGPTENTTFSTVYPMGVEERCVNGLPIGRAVSHSGAVIMDANQRLVPLGVMGELVVTGDGLARGYTDPALNRDRFVEVNIHGQVLRAYRTGDQARYRPKDGQIEFSGRMDRQLKIRGHRIEPAEVEHAILSHDDIRNAVVVTRQQEGQDLEMVAFVSTPNDQTVERDEARNQVEDWGAQFESNVYAEIEEIDSSAVGNDFMGWTSMYDGTAIDKAEMQEWLDDTMRTLHDGRDPGHVLEVGTGTGMILFNLGKGLQSYVGLEPSTSAAAFVNRKIETISSLAGKAKVEIGTATDVGQLKNLRSDLVVINSVAQYFPSPEYLVEAVTALVHIPGVKRLFFGDMRSYAMNKQFLVARALRTLGAKANKDDVRRKMVELEEFEEELLVDPAFFTGLANWLSEVEHVEILPKQMTSTNELSSYRYAAIVHLRLPGQEAQPVVTVNQDAWVDFGGSKMDRHALLHHLQSSPKAETVAISNIPYSKTIYERHVLASLDDDEVEDSLDGSAWLSAVRSTAEQCASLSGVDLVQIAKEAGFRVELSWARQRSQKGGIDAVFHHYESVHDGARVMVKFPTDDQGRALDSLANRPLQRLQSRRIEVQIRERLQAVLPSYMMPVRIVVLDEMPMNANGKVDRKVLTRRAKMISRVETTAERVGPRNEIEALLCEEFAEVLGVEVGINDDFFDLGGHSLMATKLAARSSRRFDAKVSVKDVFDHPILADLAASIQRGSTPHNPILATQYSGPVEQSFAQGRLWFLEQLNVSSTWYLQPIAVRMRGPLKIEALAAAFHALEERHETLRTTFEEHDGIGMQVVQPHRPKELRVIDVQAEHDGDYTQALHTEQTTTFNLETEPGWRVSVFRLNEDDNILSIVMHHIISDGWSFDILRKEIREFYNAALKGKDPLAQMSPLHIQYRDFSVWQKQLNQITEHKRQLDYWTKNLADNTPAELPTDLPRPAVLSGKAGVIQLSITGPVYDRLRAFCRVHQTTLFTVLLTVFRATHYRLTGAEDATIGTPIANRNRPELENLIGFFVNTQCMRITVEEEDTFETLIHQVRTTTTAAFANQDVPFERIVSALLPGSRDTSRNPLSQIMFAVHSQKNISKIELDGLESEAISRATSTRFDLEFHLFQEEKGLGGIVLFAADLFEPETIDSLVFVFQEILRQSLETPKTPIAVLPLTNGIAQLRSMCVLDIEKTAYPQDSSVIDIFRQQVAARPDATAVTDSTSQLTYAQLDLHSDELASWLRQKKMAPETLVGVLAPRSCQTIVTFLGILKASLAYLPLDVKVPVARIEAILSSISGQKLILLGQDVPVPEIQLPDVDVVPISEILGRSVPSRATDKSLGPLARNLAYVLFTSGSTGKPKGVMIEHRSIVRLVKETNLISKLPNAPRTAHLTNLVFDNSAWEIYSTLLNGGTLVCIDYATVLDSKALETVFKEQRIQTSLMPPALLKECLANMPTMFDDVEVLYALGDRFDKQDAMKARSIVKTAVYNAYGPTENTVISTIYEIAKDDSFVNGVPIGRSISNSGAFIMDSRQQLVPVGVLGELVVSGDGLARGYTDPTLDVNRFVEVTVDGQHVRVYRTGDRVRFRPKDGQIEFFSRMDQQVKIRGHRIEPAEVEHVILTNKIIRDAAVAIRRPEGQEPEMVAFVTTHENTSIEKQSVEEFAARIENEVRRWIKTLLPLYMVPTQIVVLDRMPVNANGKVDRKELAQRAQTLQKSEAGSLPSVRVPPTNDMERILCEEFADVLGVEVGITDNFFDFGGHSLMATKLAARISRRVNARVSVKSVFDHPVLVDLASTIKQDSIMHKPIPQTAYTGPVEQSFAQGRLWFLDQLNFGASWYLMPLALRLQGSLHVKSLTTALFALEQRHETLRTTFEEQDGVGIQIVHPANKKDLRILDVSKEQNSDYAKVLHKERTIPIDLTSEPGWRVSLIRLGEDDHILSIVMHHIISDGWSVDVLRQELKQFYTAALKGQDPLAQIDALPIQYRDFSLWQKLPDQVAEHQRQLEYWAEQLADNTPAELLTDLPRPDVLSGKAGAVQLTIDGPVFDQLQAFCRAHQTTMFTVLLAVFRTTHYRLTGATDATIGTPIANRNRPELERLVGFFVNTQCIRITVDVEDTFEALVRQVHSTSTTAFANQDVPFERIVSTILPGSRDASRNPLAQLMFAVHSQRDISKFQLEGLDTKPIPTAASTRFDIEFHMFQQAERLSGRVLFAEDLFELETIQGMVVIFKEILRRGLETPQTPLAVLPLTDGLAHLRSQGLLEIERPEYPRDSSMIDVFRAQVAACPDAIAVKDSTSQLTYSQLDDQSDKITAWLLQRKIPAESLVAVYAPRTCQTIITFFGILKANLAYLPLDINVPAARIEAILSTISGHKLVLLGSQVSAPAVQLKDVEYVWIDEAMAETVRTCTSPEPSATSLAYVIFTSGSTGLPKGVKVEHRGVVRLVKQSNVVAKMPQAARVAHLSNIAFDAATWEIYAALLNGGSLICIDYFTTLDSKELEAVFAREKIQAAMLPPALLKQCLVNIPATISALDVVLAAGDRFDRRDAAATQALVGGCVYNAYGPTENTTLSTIYNVVKGDANVNGVPIGRPVSNSGAYIMDPNQQLVPKGVMGELIVVGDGVARGYTDPALDVNRFIEIAIDGDQAVRAYRTGDRARYRPKDGQIEFFGRMDQQIKIRGHRIEPAEVEHAVLDNSMVQDAAVITRKQDQELEMIAFVTTRSDKEIDNDEASNQVEDWGNQFESNIYAEIEEIDSSAIGKDFMGWTSMYDGSAIDKDEMQEWLDDTMSTLLDGRQPGHVLEIGTGTGMILFNLAERMGLKSYVGLDPSEKATSFVKQAIKSRPSLAGKAEVHVGTATDVARMRDLHPEVVVINSVAQYFPSPEYLADVVGALVRIPGVKRLFFGDIRSYATNNHFLAARALHKLGEKATRDTVRSKMAELEGYEEELLVDPTFFTSLTAKLHGQVEHVEILPKRMQATNELSAYRYAAIVYIRDPKRAQTVQTVKSDAWVDFSTSQMDRSVLVSLLQSSDAEAIAVSNIPYSKTIVARHIVESLSAEDSQEMLDGPAWISAVRSSAEQCASLSAIDLVQVAKENGFRVELSCARQRSHNGAIDAVFHHYKPAQEGSRVLLQFPTDNHIRAGSLTNRPLQRLESRRVETKLKEHLFSVLPSYMIPSHIVMVDQMPLNANGKVDRKALAQRAEAVLKIEKPASERVSARNEVEAVLCEEFTDVLGVEVGITDNFFDLGGHSLMATKLAARISKHLDARVSVKDVFDYPVVADLAASIERNSIPHNPIPSTNYSGPVEQSFAQGRLWFLDQLNMGVSELYLMPLALRLRGPLRVDAFAAAVSALEARHETLRTTFMDHDGVGMQVILPSNSKKLRVIDASENDYIDILRQERTAPFNLTTEPGFRIALLQLGQTDFILSIVMHHIIYDGWSIDVLCRELGRFYSAALQGQDPLAQVSPLPIQYRDFSIWQKRPEQVAEHERQLQYWTEQLADSSPAELLTDLPRPLVPTGKAGIVQLTIEGAVYERLRAFCRVHQTTSFAVLLAAFRATHYRLTGAEDATIGSPIANRNRPELESLIGFFVNTQCIRVTIREDDTFDKLVQQVRATTTAAQVNQDVPFERIVSALMPGSRDTSRNPLVQLSFALHSQHDLGRIDLQDLTGEALPTPVFTRLDVEFHLFQQAEKFGGSVLFATDLFEPETIQGLVSVFQEVLRRGLEQPQTPIAVLPLDNASEDLRSMGLLQMERTNYPRDSSVVDVFRDQVAANPRAIAVKDSVLELTYAQLDEKSDQLAAWLCQHNIPAETIVGVLAPRSCETIIAFLGILKANLAYLPLDDNVPAARIETILSAVPGHTLVLLGSHVAAPSIGLADAEFVNINHTLGHSLQLNSTCAKLQPSATSLAYVIFTSGSTGKPKGVMIEHRSIVRLVKNSNTLAKLPRAARVAHQFNLAFDAANYEIYGTLLNGGALICVDYSTLLDIDALVAMFKREKITASSLSPGLLKQCVNSAPEMLKALQVIYTGGDRLDGRDAIELQALVPGGVYNMYGPTENTVISTLYNLGDKHSYVNGVPIGTTVSNSGAYVMDALQQLVPVGVMGELVVTGDGLARGYTDPELDRNRFIKVNIDGQVVRAYRTGDRVRYRRIDGQLEFFGRMDQQIKIRGFRIETAEVENAMLSHSAVRNAAVVVPTQDIQEKGMIGFVVIENNTPKNEESKEEHLLQTELAILNRMKSILPPYMLPSRIIILDQMPSNFNGKVDRKELDRMAQSVPRQKTTAGRIVPRNELEASLCKEFAEVLGVEVGITDNFFDLGGHSLLATKLAARISRRLDTRVSVKDVFDQPVPADLALKVSSYISQGHAMDNGTLSTTNSIPFQLLHFEDSQKFIDRDIVPQLAHQSAKIVDVYPVTWIQKHFLVDPATGLPRTPSLFFVDFPANADCDKICNASRSLIQLFDIFRTVFVQAAGNFYQVVLEELDIPISVIETEDISTATRVLKEQDQQNPLQFGQGFLRFAVVKTRSAVRLVLRISHCLYDGLSFEHVVQSLHALYNGDRIPTQPKFVQYVQHLTDSRKEGYDFWLSVLEESSMTVVETGRRAQQLSSPEGAWFVEKIIKAVIPANSDGITQATVFTTASTILLARMTGSSDITFSRLVSGRQSLPINDQHIVGPCTNIVPVRIRMTDGTNARELLGMVQDQYIDSLPFETLGFDDIKENCTKWPASTTNYGCCSTFQNFEMQPQSQVQDERVRLAGLTNFKDAELLNGATATNKRVLDDVPMHEIDMIGIPEPDGLHVRVVLTASRQIFEEEVVDRMHEEFCDIILGLNKILQK.

The adenylation 1 stretch occupies residues 267–663; the sequence is ANRVVDTPQK…GRRDSQIKIR (397 aa). Residues 788 to 864 enclose the Carrier 1 domain; the sequence is ASLMTEGITL…GLINVMQQSS (77 aa). An O-(pantetheine 4'-phosphoryl)serine modification is found at Ser-825. Residues 882–1313 are condensation 1; sequence SFAQGRLWFL…TPIAHLQLTD (432 aa). An adenylation 2 region spans residues 1341–1736; that stretch reads FQKQVAACPN…GRMDFQIKIR (396 aa). Positions 1865–1939 constitute a Carrier 2 domain; it reads AARNEIEAVL…NLAATIKRGS (75 aa). Ser-1899 is subject to O-(pantetheine 4'-phosphoryl)serine. The segment at 1957–2383 is condensation 2; the sequence is SFAQGRLWFL…DQPQTPLALL (427 aa). The segment at 2418-2812 is adenylation 3; it reads QVAASPNATA…GRMDQQIKIR (395 aa). Positions 2891–3023 are methyltransferase (M) domain 1; it reads VGNDFMGWTS…EYLSKVLYAL (133 aa). In terms of domain architecture, Carrier 3 spans 3353 to 3427; sequence GARNETEAVL…DLAASIRRGS (75 aa). Ser-3387 is subject to O-(pantetheine 4'-phosphoryl)serine. The condensation 3 stretch occupies residues 3445–3869; the sequence is SFAQGRLWFL…DQPQIPIAVL (425 aa). Positions 3901-4300 are adenylation 4; that stretch reads FRAQVVACPD…GRMDQQVKIR (400 aa). The region spanning 4412–4486 is the Carrier 4 domain; it reads PPRNEIETIL…NLAAAVQRGS (75 aa). Ser-4446 carries the post-translational modification O-(pantetheine 4'-phosphoryl)serine. Residues 4504 to 4935 form a condensation 4 region; sequence SFAQGRLWFL…TPIAALSLTD (432 aa). Residues 4963–5362 form an adenylation 5 region; the sequence is FREQVATYPD…GRMDRQLKIR (400 aa). The interval 5430-5567 is methyltransferase (M) domain 2; sequence TYAELDTLVK…VAQYFPTPEY (138 aa). A Carrier 5 domain is found at 5897 to 5971; the sequence is QPRNEVEAVL…DLAAAIQRGS (75 aa). Ser-5931 carries the post-translational modification O-(pantetheine 4'-phosphoryl)serine. The segment at 5989–6416 is condensation 5; the sequence is SYAQGRLWFL…DQPQTPLALL (428 aa). Residues 6451–6845 form an adenylation 6 region; it reads QVAASPNATA…GRMDQQIKIR (395 aa). A methyltransferase (M) domain 3 region spans residues 6924-7056; it reads VGNDFMGWTS…EYLSKVLYAL (133 aa). The Carrier 6 domain occupies 7386–7460; the sequence is GARNEIEAAL…DLAGAVQRGS (75 aa). Ser-7420 bears the O-(pantetheine 4'-phosphoryl)serine mark. The tract at residues 7478–7901 is condensation 6; that stretch reads SFAQGRLWFL…GLETPRLPIS (424 aa). Positions 7934 to 8335 are adenylation 7; it reads FRTQVAASPD…GRMDRQLKIR (402 aa). Residues 8404–8540 are methyltransferase (M) domain 4; the sequence is YAEIEEIDSS…AQYFPSPEYL (137 aa). The Carrier 7 domain maps to 8871–8945; it reads GPRNEIEALL…DLAASIQRGS (75 aa). O-(pantetheine 4'-phosphoryl)serine is present on Ser-8905. The interval 8963–9392 is condensation 7; it reads SFAQGRLWFL…PKTPIAVLPL (430 aa). An adenylation 8 region spans residues 9422-9822; sequence FRQQVAARPD…SRMDQQVKIR (401 aa). The Carrier 8 domain maps to 9943-10017; sequence PPTNDMERIL…DLASTIKQDS (75 aa). Residue Ser-9977 is modified to O-(pantetheine 4'-phosphoryl)serine. Positions 10035–10462 are condensation 8; the sequence is SFAQGRLWFL…ETPQTPLAVL (428 aa). The interval 10494–10892 is adenylation 9; it reads FRAQVAACPD…GRMDQQIKIR (399 aa). Residues 10959–11105 form a methyltransferase (M) domain 5 region; the sequence is IYAEIEEIDS…EYLADVVGAL (147 aa). Positions 11428–11502 constitute a Carrier 9 domain; it reads SARNEVEAVL…DLAASIERNS (75 aa). O-(pantetheine 4'-phosphoryl)serine is present on Ser-11462. The interval 11520-11945 is condensation 9; it reads SFAQGRLWFL…EQPQTPIAVL (426 aa). Residues 11977-12377 are adenylation 10; that stretch reads FRDQVAANPR…GRMDQQIKIR (401 aa). Residues 12495-12569 enclose the Carrier 10 domain; that stretch reads VPRNELEASL…DLALKVSSYI (75 aa). Ser-12529 carries the post-translational modification O-(pantetheine 4'-phosphoryl)serine. The interval 12647-13032 is condensation 10; sequence FPANADCDKI…RMHEEFCDII (386 aa).

The protein belongs to the NRP synthetase family.

The protein operates within secondary metabolite biosynthesis. Functionally, nonribosomal peptide synthetase; part of the gene cluster that mediates the biosynthesis of KK-1, a novel cyclic depsipeptide with 10 residues which is a promising active compound with high activity against many plant pathogens, especially Botrytis cinerea. The nonribosomal peptide synthetase (NRPS) kk1B catalyzes the elongation and cyclization of the decapeptide chain composed of 1 D-lactic acid residue (D-Lac), 1 pipecolic acid residue (Pip), 1 aspartic acid residue (Asp), 1 isoleucine residue (Ile), 1 glycine residue (Gly), 1 tyrosine residue (Tyr) and 4 valine residues (Val). The Asp, Ile and 3 Val residues are N-methylated by the 5 methyltransferase domains from the NRPS (found in modules 3, 5, 6, 7 and 9), whereas the Tyr residue is O-methylated by the cluster encoded O-methyltransferase kk1A. Cyclization with the hydroxy group of the D-lactic acid as a nucleophile is presumed to occur in the final module of NRPS, resulting in the formation of the depsipeptide ester bond through macrocyclization by the C-terminal C domain. The thioesterase kk1J is likely to be involved in the corrective mechanism of peptide chain synthesis. The D-lactate dehydrogenase kk1H is involved in the synthesis of D-lactic acid from pyruvic acid, which is recognized by the A domain of the first kk1B module. The pyrroline-5-carboxylate reductase kk1I is involved in the synthesis of the L-pipecolic acid residue of KK-1 from delta-1-pyrroline-5-carboxylate (P5C), a metabolic intermediate of lysine. It is still unclear how kk1C and kk1D are involved in the production of KK-1. This is Nonribosomal peptide synthetase kk1B from Curvularia clavata.